The following is a 193-amino-acid chain: MAKAKARRRVRDTWKEKSWYTIKTPVNFEDKEIGETPARDPDYLIGRGVEVTMRELSGDFSKQYIKLRFEIDNVAGDVANTKFTGHKTTTDYVRSMIRRGTSRIDASSVVKTKDDRKVKLHVLAVTTRRAKSSQQKYMRQVINDLLAETAAEKSFDELIKLVVNGKLASEVYHNAKKIYPLKRVEIIKSKVLN.

Belongs to the eukaryotic ribosomal protein eS1 family.

The chain is Small ribosomal subunit protein eS1 from Methanobrevibacter smithii (strain ATCC 35061 / DSM 861 / OCM 144 / PS).